A 241-amino-acid polypeptide reads, in one-letter code: 1-(5-phosphoribosyl)-5-[(5-phosphoribosylamino)methylideneamino] imidazole-4-carboxamide isomerase (241 aa).

Asp-10 (proton acceptor) is an active-site residue. Catalysis depends on Asp-129, which acts as the Proton donor.

Belongs to the HisA/HisF family.

It is found in the cytoplasm. It catalyses the reaction 1-(5-phospho-beta-D-ribosyl)-5-[(5-phospho-beta-D-ribosylamino)methylideneamino]imidazole-4-carboxamide = 5-[(5-phospho-1-deoxy-D-ribulos-1-ylimino)methylamino]-1-(5-phospho-beta-D-ribosyl)imidazole-4-carboxamide. Its pathway is amino-acid biosynthesis; L-histidine biosynthesis; L-histidine from 5-phospho-alpha-D-ribose 1-diphosphate: step 4/9. The chain is 1-(5-phosphoribosyl)-5-[(5-phosphoribosylamino)methylideneamino] imidazole-4-carboxamide isomerase from Salinispora tropica (strain ATCC BAA-916 / DSM 44818 / JCM 13857 / NBRC 105044 / CNB-440).